The chain runs to 162 residues: uncharacterized protein (162 aa).

The interval 1–49 (MNSRTASARGWFSSRPPTSESDLEPATDGPASETTTLSPEATTFNDTRI) is disordered. Positions 32–46 (SETTTLSPEATTFND) are enriched in polar residues. A helical transmembrane segment spans residues 62-82 (MLLSFGIITVIGLAVALVLYI).

It is found in the membrane. This is an uncharacterized protein from Homo sapiens (Human).